We begin with the raw amino-acid sequence, 479 residues long: Poly(A) polymerase catalytic subunit (479 aa).

Active-site residues include D202 and D204. Positions 202, 204, and 253 each coordinate Ca(2+).

Belongs to the poxviridae poly(A) polymerase catalytic subunit family. In terms of assembly, heterodimer of a large (catalytic) subunit and a small (regulatory) subunit.

It carries out the reaction RNA(n) + ATP = RNA(n)-3'-adenine ribonucleotide + diphosphate. Polymerase that creates the 3'-poly(A) tail of mRNA's. This chain is Poly(A) polymerase catalytic subunit (OPG063), found in Camelus.